The sequence spans 537 residues: CTP synthase (537 aa).

Positions 1–267 (MTKYIFVTGG…DQIVLDHFDV (267 aa)) are amidoligase domain. Position 13 (Ser13) interacts with CTP. Ser13 contributes to the UTP binding site. ATP is bound at residue 14–19 (SIGKGI). Tyr54 contributes to the L-glutamine binding site. Residue Asp71 participates in ATP binding. Mg(2+) is bound by residues Asp71 and Glu141. CTP contacts are provided by residues 148 to 150 (DIE), 188 to 193 (KTKPTQ), and Lys224. Residues 188–193 (KTKPTQ) and Lys224 contribute to the UTP site. Residues 292–535 (KIALVGKYVA…IDAANQTGKV (244 aa)) form the Glutamine amidotransferase type-1 domain. Residue Gly354 participates in L-glutamine binding. Cys381 acts as the Nucleophile; for glutamine hydrolysis in catalysis. L-glutamine is bound by residues 382-385 (LGMQ), Glu405, and Arg463. Catalysis depends on residues His508 and Glu510.

Belongs to the CTP synthase family. Homotetramer.

The catalysed reaction is UTP + L-glutamine + ATP + H2O = CTP + L-glutamate + ADP + phosphate + 2 H(+). The enzyme catalyses L-glutamine + H2O = L-glutamate + NH4(+). It catalyses the reaction UTP + NH4(+) + ATP = CTP + ADP + phosphate + 2 H(+). It functions in the pathway pyrimidine metabolism; CTP biosynthesis via de novo pathway; CTP from UDP: step 2/2. With respect to regulation, allosterically activated by GTP, when glutamine is the substrate; GTP has no effect on the reaction when ammonia is the substrate. The allosteric effector GTP functions by stabilizing the protein conformation that binds the tetrahedral intermediate(s) formed during glutamine hydrolysis. Inhibited by the product CTP, via allosteric rather than competitive inhibition. In terms of biological role, catalyzes the ATP-dependent amination of UTP to CTP with either L-glutamine or ammonia as the source of nitrogen. Regulates intracellular CTP levels through interactions with the four ribonucleotide triphosphates. The sequence is that of CTP synthase from Lactiplantibacillus plantarum (strain ATCC BAA-793 / NCIMB 8826 / WCFS1) (Lactobacillus plantarum).